We begin with the raw amino-acid sequence, 202 residues long: Kunitz trypsin inhibitor 7 (202 aa).

The N-terminal stretch at 1–25 is a signal peptide; it reads MKTFRSMLISLLLVAITTTSGVVEG. The cysteines at positions 69 and 115 are disulfide-linked. N-linked (GlcNAc...) asparagine glycosylation is found at Asn-93, Asn-136, Asn-144, and Asn-198.

This sequence belongs to the protease inhibitor I3 (leguminous Kunitz-type inhibitor) family.

In terms of biological role, exhibits Kunitz trypsin protease inhibitor activity. The polypeptide is Kunitz trypsin inhibitor 7 (Arabidopsis thaliana (Mouse-ear cress)).